We begin with the raw amino-acid sequence, 245 residues long: Bis(5'-nucleosyl)-tetraphosphatase PrpE [asymmetrical] (245 aa).

The protein belongs to the PrpE family. Ni(2+) serves as cofactor.

The catalysed reaction is P(1),P(4)-bis(5'-guanosyl) tetraphosphate + H2O = GMP + GTP + 2 H(+). In terms of biological role, asymmetrically hydrolyzes Ap4p to yield AMP and ATP. This is Bis(5'-nucleosyl)-tetraphosphatase PrpE [asymmetrical] from Geobacillus sp. (strain WCH70).